Here is a 73-residue protein sequence, read N- to C-terminus: Adipokinetic prohormone type 2 (73 aa).

An N-terminal signal peptide occupies residues M1 to G20. Q21 carries the post-translational modification Pyrrolidone carboxylic acid. N30 bears the Asparagine amide mark. A propeptide spanning residues S34 to M73 is cleaved from the precursor.

In terms of tissue distribution, expressed in corpora cardiaca (CC), corpora allata (CA) and gnathal ganglion (GNG) (at protein level). Expression in CC and CA detected in all animals, expression in GNG detected in few animals (at protein level). Not expressed in antennal lobe (AL) (at protein level).

Its subcellular location is the secreted. Functionally, this hormone, released from cells in the corpora cardiaca, causes release of diglycerides from the fat body and stimulation of muscles to use these diglycerides as an energy source during energy-demanding processes. The polypeptide is Adipokinetic prohormone type 2 (Agrotis ipsilon (Black cutworm moth)).